Reading from the N-terminus, the 375-residue chain is MKYTYKISKVKISGDLMVFGKIEEEFKEFLESRRKYNEFIKNGLIDEDEALKLFKIDNWRDYLKLFDIASRVRDYFKKKIEITSTIHITNICHVNPKCLYCGFAAGTSKEGYYEPFRLTDEEIKKSAIAIEESGIKRVSCSSAHGYQGKEVIRALKIVKKYTNLEVLVNAGADLTEESIKELKKYGIDTICCNLETINENLFKKVKPGEELEDRIRVCKLVNKYDIELSTGLLIGIGESYEDRVEHLFYLKNELNVGEIPIMGFNPYKGTPMENHPKCSALEQAKTIAITRLIFPNIRITSPTPTIGAELVQFALFGGASNVATVIPKNHPMNVKGVGNPKTGNLEEVVKMIMDLGLKPKLDWRRYENYLKIYGK.

Residues 78 to 302 (KKIEITSTIH…IFPNIRITSP (225 aa)) enclose the Radical SAM core domain. [4Fe-4S] cluster-binding residues include C92, C98, and C101.

Requires [4Fe-4S] cluster as cofactor.

This is an uncharacterized protein from Methanocaldococcus jannaschii (strain ATCC 43067 / DSM 2661 / JAL-1 / JCM 10045 / NBRC 100440) (Methanococcus jannaschii).